Consider the following 157-residue polypeptide: MRCPKCGGSKSSVIDSRQAEDGNTIRRRRECEDCQHRFTTYERVEERTLVVVKKDGTREQFSRDKIFNGIIRSAQKRPVSSDEIEALVNRIEQKVRSSSDNEISSDFIGNLVMDELAELDEITYVRFASVYRSFKDVGELESLLQQITKGVKKKREE.

The segment at 1-26 is disordered; that stretch reads MRCPKCGGSKSSVIDSRQAEDGNTIR. Residues 3-34 fold into a zinc finger; that stretch reads CPKCGGSKSSVIDSRQAEDGNTIRRRRECEDC. Residues 17–26 show a composition bias toward basic and acidic residues; sequence RQAEDGNTIR. In terms of domain architecture, ATP-cone spans 49 to 139; the sequence is LVVVKKDGTR…VYRSFKDVGE (91 aa).

Belongs to the NrdR family. Zn(2+) is required as a cofactor.

Functionally, negatively regulates transcription of bacterial ribonucleotide reductase nrd genes and operons by binding to NrdR-boxes. This chain is Transcriptional repressor NrdR, found in Streptococcus gordonii (strain Challis / ATCC 35105 / BCRC 15272 / CH1 / DL1 / V288).